The chain runs to 248 residues: Triosephosphate isomerase (248 aa).

Residues Asn-10 and Lys-12 each contribute to the substrate site. His-95 acts as the Electrophile in catalysis. Glu-165 serves as the catalytic Proton acceptor.

It belongs to the triosephosphate isomerase family. Homodimer.

The catalysed reaction is D-glyceraldehyde 3-phosphate = dihydroxyacetone phosphate. It functions in the pathway carbohydrate biosynthesis; gluconeogenesis. It participates in carbohydrate degradation; glycolysis; D-glyceraldehyde 3-phosphate from glycerone phosphate: step 1/1. The polypeptide is Triosephosphate isomerase (tpi-1) (Neurospora crassa (strain ATCC 24698 / 74-OR23-1A / CBS 708.71 / DSM 1257 / FGSC 987)).